Here is a 192-residue protein sequence, read N- to C-terminus: Orotate phosphoribosyltransferase (192 aa).

Position 116 to 124 (116 to 124 (EDIVTTGLS)) interacts with 5-phospho-alpha-D-ribose 1-diphosphate. Orotate is bound by residues Thr-120 and Arg-148.

It belongs to the purine/pyrimidine phosphoribosyltransferase family. PyrE subfamily. As to quaternary structure, homodimer. It depends on Mg(2+) as a cofactor.

It carries out the reaction orotidine 5'-phosphate + diphosphate = orotate + 5-phospho-alpha-D-ribose 1-diphosphate. It functions in the pathway pyrimidine metabolism; UMP biosynthesis via de novo pathway; UMP from orotate: step 1/2. Its function is as follows. Catalyzes the transfer of a ribosyl phosphate group from 5-phosphoribose 1-diphosphate to orotate, leading to the formation of orotidine monophosphate (OMP). The sequence is that of Orotate phosphoribosyltransferase from Bartonella tribocorum (strain CIP 105476 / IBS 506).